The chain runs to 388 residues: Trans-enoyl reductase tenC (388 aa).

51-54 contributes to the NADP(+) binding site; it reads VDGK. 142–149 contributes to the substrate binding site; that stretch reads VGIASVGM. NADP(+) is bound by residues 219 to 222, tyrosine 237, and 284 to 285; these read SSES and LD. Residue 304–308 coordinates substrate; it reads SFTQF. NADP(+) is bound at residue 373–374; the sequence is IK.

It belongs to the zinc-containing alcohol dehydrogenase family. As to quaternary structure, monomer.

The protein operates within secondary metabolite biosynthesis. Its function is as follows. Trans-enoyl reductase; part of the gene cluster that mediates the biosynthesis of tenellin-type 2-pyridones, iron-chelating compounds involved in iron stress tolerance, competition with the natural competitor fungus Metarhizium robertsii and insect hosts infection. TenC collaborates with the hybrid PKS-NRPS synthetase tenS to catalyze the assembly of the polyketide-amino acid backbone, since tenS lacks a designated enoylreductase (ER) domain. Upon formation of the polyketide backbone on the thiotemplate of tenS, the triketide is transferred to the NRPS module and linked to tyrosine to produce the pyrrolidine-2-dione intermediates, including pretellinin A, 11-hydropretellenin A, 12-hydropretellenin A, 13-hydropretellenin A, 14-hydropretellenin A, 12-oxopretellenin A and prototellinin D. The pathway begins with the assembly of the polyketide-amino acid backbone by the hybrid PKS-NRPS tenS with the help of the enoyl reductase tenC. These enzymes catalyze the synthesis of the pyrrolidine-2-dione intermediates pretellinin A, 11-hydropretellenin A, 12-hydropretellenin A, 13-hydropretellenin A, 14-hydropretellenin A, 12-oxopretellenin A and prototellinin D. The cytochrome P450 monooxygenase tenA then catalyzes an oxidative ring expansion of pretenellin A and 14-hydropretellenin A to form the 2-pyridone core, leading to pretenellin B and pyridovericin, respectively. The cytochrome P450 monooxygenase tenB is then required for the selective N-hydroxylation of the 2-pyridone nitrogen of yield tellinin and 15-hydroxytellenin (15-HT), respectively. The UDP-glucosyltransferase GT1 and the methyltransferase MT1, located outside the tenS gene cluster, contribute to the stepwise glycosylation and methylation of 15-HT to obtain the glycoside pyridovericin-N-O-(4-O-methyl-beta-D-glucopyranoside) (PMGP). Additional related compounds such as 1-O-methyl-15-HT, (8Z)-1-O-methyl-15-HT, and O-methyltenellin A are also produced but the enzymes involved in their biosynthesis have still to be determined. The polypeptide is Trans-enoyl reductase tenC (Beauveria bassiana (strain ARSEF 2860) (White muscardine disease fungus)).